The following is a 94-amino-acid chain: PqqA binding protein (94 aa).

The protein belongs to the PqqD family. Monomer. Interacts with PqqE.

Its pathway is cofactor biosynthesis; pyrroloquinoline quinone biosynthesis. Functionally, functions as a PqqA binding protein and presents PqqA to PqqE, in the pyrroloquinoline quinone (PQQ) biosynthetic pathway. The sequence is that of PqqA binding protein from Pseudomonas savastanoi pv. phaseolicola (strain 1448A / Race 6) (Pseudomonas syringae pv. phaseolicola (strain 1448A / Race 6)).